The sequence spans 238 residues: Ethylene-responsive transcription factor ERN3 (238 aa).

The AP2/ERF DNA-binding region spans 24-81 (KFVGVRQRASGKWAAEIKDTSKNIRMWLGTYKTAEEAARAYDEAAFLLRGTNTRTNFS).

Belongs to the AP2/ERF transcription factor family. ERF subfamily. Expressed in roots, root hairs and leaves.

The protein resides in the nucleus. In terms of biological role, transcription factor involved in symbiotic nodule signaling in response to rhizobial Nod factors (NFs). Binds to the GCC box (NF-responsive box) of ENOD11 promoter. May act as transcriptional repressor of NF-responsive box-containing target gene promoters in root hairs. The sequence is that of Ethylene-responsive transcription factor ERN3 from Medicago truncatula (Barrel medic).